Reading from the N-terminus, the 200-residue chain is NADH-quinone oxidoreductase subunit B (200 aa).

[4Fe-4S] cluster is bound by residues C79, C80, C144, and C174.

It belongs to the complex I 20 kDa subunit family. In terms of assembly, NDH-1 is composed of 14 different subunits. Subunits NuoB, C, D, E, F, and G constitute the peripheral sector of the complex. Requires [4Fe-4S] cluster as cofactor.

The protein resides in the cell inner membrane. It catalyses the reaction a quinone + NADH + 5 H(+)(in) = a quinol + NAD(+) + 4 H(+)(out). Its function is as follows. NDH-1 shuttles electrons from NADH, via FMN and iron-sulfur (Fe-S) centers, to quinones in the respiratory chain. The immediate electron acceptor for the enzyme in this species is believed to be ubiquinone. Couples the redox reaction to proton translocation (for every two electrons transferred, four hydrogen ions are translocated across the cytoplasmic membrane), and thus conserves the redox energy in a proton gradient. This Caulobacter vibrioides (strain NA1000 / CB15N) (Caulobacter crescentus) protein is NADH-quinone oxidoreductase subunit B.